The sequence spans 389 residues: Glutamate 5-kinase (389 aa).

Lys26 contributes to the ATP binding site. The substrate site is built by Ser66, Asp153, and Asn167. Position 187 to 188 (187 to 188 (TD)) interacts with ATP. In terms of domain architecture, PUA spans 293–371 (AGTLFLDQGA…EQIEWILGHR (79 aa)).

Belongs to the glutamate 5-kinase family.

The protein localises to the cytoplasm. The catalysed reaction is L-glutamate + ATP = L-glutamyl 5-phosphate + ADP. It functions in the pathway amino-acid biosynthesis; L-proline biosynthesis; L-glutamate 5-semialdehyde from L-glutamate: step 1/2. Its function is as follows. Catalyzes the transfer of a phosphate group to glutamate to form L-glutamate 5-phosphate. This Rhodopirellula baltica (strain DSM 10527 / NCIMB 13988 / SH1) protein is Glutamate 5-kinase.